The sequence spans 224 residues: Leucyl/phenylalanyl-tRNA--protein transferase (224 aa).

It belongs to the L/F-transferase family.

It is found in the cytoplasm. The enzyme catalyses N-terminal L-lysyl-[protein] + L-leucyl-tRNA(Leu) = N-terminal L-leucyl-L-lysyl-[protein] + tRNA(Leu) + H(+). The catalysed reaction is N-terminal L-arginyl-[protein] + L-leucyl-tRNA(Leu) = N-terminal L-leucyl-L-arginyl-[protein] + tRNA(Leu) + H(+). It catalyses the reaction L-phenylalanyl-tRNA(Phe) + an N-terminal L-alpha-aminoacyl-[protein] = an N-terminal L-phenylalanyl-L-alpha-aminoacyl-[protein] + tRNA(Phe). Its function is as follows. Functions in the N-end rule pathway of protein degradation where it conjugates Leu, Phe and, less efficiently, Met from aminoacyl-tRNAs to the N-termini of proteins containing an N-terminal arginine or lysine. This Rhodopseudomonas palustris (strain HaA2) protein is Leucyl/phenylalanyl-tRNA--protein transferase.